A 360-amino-acid chain; its full sequence is MSERKRRLMVMAGGTGGHVFPGLAVAHYLQSQGWDIRWLGTADRMEAQLVPKHGIEIEYIRISGLRGKGVKALIAAPIRIIKAIFQARRIMKRYQPDAVLGMGGYVSGPGGVAAWSCGIPVVLHEQNGIAGLTNRWLSKIAKRVLQAFPGAFANAPVVGNPVRDDVLALEAPAERLKGREGAVRVLVIGGSQGARILNHTMPVVAGLLGERVTIWHQAGKGSESDTKLRYQNELSKNSVKSEYKVTEFIDDIAQAYQWADVVVCRSGALTVSEIAAAGLPAIFVPFQHKDRQQYWNALPLENAGAARIIEQNDLTPEAIADTLENWDRHQLMLMAEKAQSVAITDATERVANVIIEVAKK.

Residues 15 to 17, N127, R163, S191, I249, 268 to 273, and Q293 contribute to the UDP-N-acetyl-alpha-D-glucosamine site; these read TGG and ALTVSE.

The protein belongs to the glycosyltransferase 28 family. MurG subfamily.

The protein localises to the cell inner membrane. The enzyme catalyses di-trans,octa-cis-undecaprenyl diphospho-N-acetyl-alpha-D-muramoyl-L-alanyl-D-glutamyl-meso-2,6-diaminopimeloyl-D-alanyl-D-alanine + UDP-N-acetyl-alpha-D-glucosamine = di-trans,octa-cis-undecaprenyl diphospho-[N-acetyl-alpha-D-glucosaminyl-(1-&gt;4)]-N-acetyl-alpha-D-muramoyl-L-alanyl-D-glutamyl-meso-2,6-diaminopimeloyl-D-alanyl-D-alanine + UDP + H(+). The protein operates within cell wall biogenesis; peptidoglycan biosynthesis. Its function is as follows. Cell wall formation. Catalyzes the transfer of a GlcNAc subunit on undecaprenyl-pyrophosphoryl-MurNAc-pentapeptide (lipid intermediate I) to form undecaprenyl-pyrophosphoryl-MurNAc-(pentapeptide)GlcNAc (lipid intermediate II). In Proteus mirabilis (strain HI4320), this protein is UDP-N-acetylglucosamine--N-acetylmuramyl-(pentapeptide) pyrophosphoryl-undecaprenol N-acetylglucosamine transferase.